The primary structure comprises 55 residues: MVWSQIERRKIMEQWPDMHNAEISKRLGKRWKLLPDYEKIPFIKEAERLRLKHMA.

The HMG box DNA-binding region spans 1-55 (MVWSQIERRKIMEQWPDMHNAEISKRLGKRWKLLPDYEKIPFIKEAERLRLKHMA).

It localises to the nucleus. This is Protein SOX-19 (Sox19) from Mus musculus (Mouse).